Reading from the N-terminus, the 319-residue chain is Acetyl-coenzyme A carboxylase carboxyl transferase subunit alpha (319 aa).

Positions 32 to 293 (NIQEEISRLQ…HTALAEALQT (262 aa)) constitute a CoA carboxyltransferase C-terminal domain.

The protein belongs to the AccA family. In terms of assembly, acetyl-CoA carboxylase is a heterohexamer composed of biotin carboxyl carrier protein (AccB), biotin carboxylase (AccC) and two subunits each of ACCase subunit alpha (AccA) and ACCase subunit beta (AccD).

It is found in the cytoplasm. The catalysed reaction is N(6)-carboxybiotinyl-L-lysyl-[protein] + acetyl-CoA = N(6)-biotinyl-L-lysyl-[protein] + malonyl-CoA. Its pathway is lipid metabolism; malonyl-CoA biosynthesis; malonyl-CoA from acetyl-CoA: step 1/1. Component of the acetyl coenzyme A carboxylase (ACC) complex. First, biotin carboxylase catalyzes the carboxylation of biotin on its carrier protein (BCCP) and then the CO(2) group is transferred by the carboxyltransferase to acetyl-CoA to form malonyl-CoA. The protein is Acetyl-coenzyme A carboxylase carboxyl transferase subunit alpha of Thioalkalivibrio sulfidiphilus (strain HL-EbGR7).